The primary structure comprises 477 residues: 23S rRNA (uracil(1939)-C(5))-methyltransferase RlmD (477 aa).

In terms of domain architecture, TRAM spans 7–66; the sequence is KTENFPPDWLLVESLDLEAQGVAHRADGKVVFIKGALPFELVSANVHRKKNNWEQGVVTA. [4Fe-4S] cluster contacts are provided by C79, C89, C92, and C171. S-adenosyl-L-methionine-binding residues include Q280, F309, N314, E330, N365, and D386. C432 acts as the Nucleophile in catalysis.

It belongs to the class I-like SAM-binding methyltransferase superfamily. RNA M5U methyltransferase family. RlmD subfamily.

It catalyses the reaction uridine(1939) in 23S rRNA + S-adenosyl-L-methionine = 5-methyluridine(1939) in 23S rRNA + S-adenosyl-L-homocysteine + H(+). Its function is as follows. Catalyzes the formation of 5-methyl-uridine at position 1939 (m5U1939) in 23S rRNA. The polypeptide is 23S rRNA (uracil(1939)-C(5))-methyltransferase RlmD (Albidiferax ferrireducens (strain ATCC BAA-621 / DSM 15236 / T118) (Rhodoferax ferrireducens)).